A 387-amino-acid chain; its full sequence is Chaperone protein DnaJ (387 aa).

The J domain occupies Asp-5 to Gly-70. The segment at Gly-130–Ser-208 adopts a CR-type zinc-finger fold. 8 residues coordinate Zn(2+): Cys-143, Cys-146, Cys-160, Cys-163, Cys-182, Cys-185, Cys-196, and Cys-199. 4 CXXCXGXG motif repeats span residues Cys-143 to Gly-150, Cys-160 to Gly-167, Cys-182 to Gly-189, and Cys-196 to Gly-203.

This sequence belongs to the DnaJ family. In terms of assembly, homodimer. It depends on Zn(2+) as a cofactor.

The protein resides in the cytoplasm. Functionally, participates actively in the response to hyperosmotic and heat shock by preventing the aggregation of stress-denatured proteins and by disaggregating proteins, also in an autonomous, DnaK-independent fashion. Unfolded proteins bind initially to DnaJ; upon interaction with the DnaJ-bound protein, DnaK hydrolyzes its bound ATP, resulting in the formation of a stable complex. GrpE releases ADP from DnaK; ATP binding to DnaK triggers the release of the substrate protein, thus completing the reaction cycle. Several rounds of ATP-dependent interactions between DnaJ, DnaK and GrpE are required for fully efficient folding. Also involved, together with DnaK and GrpE, in the DNA replication of plasmids through activation of initiation proteins. This chain is Chaperone protein DnaJ, found in Hydrogenovibrio crunogenus (strain DSM 25203 / XCL-2) (Thiomicrospira crunogena).